Reading from the N-terminus, the 234-residue chain is BTB/POZ domain-containing protein KCTD5 (234 aa).

A2 carries the N-acetylalanine modification. The BTB domain occupies 44-146 (KWVRLNVGGT…LVKDKIRERD (103 aa)). A disordered region spans residues 213–234 (PYGTTSEPSEKAKILQERGSRM). The span at 220 to 234 (PSEKAKILQERGSRM) shows a compositional bias: basic and acidic residues.

As to quaternary structure, homopentamer. Interacts (via C-terminus) with GRASP55/GORASP2. Interacts with CUL3 and with ubiquitinated proteins. Interacts with CRY1.

It is found in the cytoplasm. It localises to the cytosol. The protein resides in the nucleus. Its function is as follows. Its interaction with CUL3 suggests that it may act as a substrate adapter in some E3 ligase complex. Does not affect the function of Kv channel Kv2.1/KCNB1, Kv1.2/KCNA2, Kv4.2/KCND2 and Kv3.4/KCNC4. The chain is BTB/POZ domain-containing protein KCTD5 (Kctd5) from Rattus norvegicus (Rat).